The chain runs to 479 residues: Probable periplasmic serine endoprotease DegP-like (479 aa).

The N-terminal stretch at 1-27 (MSIPRLKSYLSMFAAVLMLGQVLSAQA) is a signal peptide. Catalysis depends on charge relay system residues H117, D147, and S220. Residues 218–220 (GNS) and 275–279 (LGVVI) contribute to the substrate site. PDZ domains lie at 264-355 (LKKD…IRNG) and 361-468 (DVTI…LRQG). The disordered stretch occupies residues 368 to 395 (PDDDADIGTGTGADGSAERSSNRLGVSV).

The protein belongs to the peptidase S1C family.

It localises to the periplasm. It carries out the reaction Acts on substrates that are at least partially unfolded. The cleavage site P1 residue is normally between a pair of hydrophobic residues, such as Val-|-Val.. In terms of biological role, might be efficient in the degradation of transiently denatured and unfolded proteins which accumulate in the periplasm following stress conditions. This Pseudomonas putida (strain W619) protein is Probable periplasmic serine endoprotease DegP-like.